A 338-amino-acid chain; its full sequence is S-adenosylmethionine:tRNA ribosyltransferase-isomerase (338 aa).

This sequence belongs to the QueA family. In terms of assembly, monomer.

The protein resides in the cytoplasm. It carries out the reaction 7-aminomethyl-7-carbaguanosine(34) in tRNA + S-adenosyl-L-methionine = epoxyqueuosine(34) in tRNA + adenine + L-methionine + 2 H(+). It functions in the pathway tRNA modification; tRNA-queuosine biosynthesis. In terms of biological role, transfers and isomerizes the ribose moiety from AdoMet to the 7-aminomethyl group of 7-deazaguanine (preQ1-tRNA) to give epoxyqueuosine (oQ-tRNA). This chain is S-adenosylmethionine:tRNA ribosyltransferase-isomerase, found in Carboxydothermus hydrogenoformans (strain ATCC BAA-161 / DSM 6008 / Z-2901).